Here is a 545-residue protein sequence, read N- to C-terminus: ATP synthase subunit alpha (545 aa).

Position 173–180 (173–180) interacts with ATP; sequence GDRKTGKT.

This sequence belongs to the ATPase alpha/beta chains family. In terms of assembly, F-type ATPases have 2 components, CF(1) - the catalytic core - and CF(0) - the membrane proton channel. CF(1) has five subunits: alpha(3), beta(3), gamma(1), delta(1), epsilon(1). CF(0) has three main subunits: a(1), b(2) and c(9-12). The alpha and beta chains form an alternating ring which encloses part of the gamma chain. CF(1) is attached to CF(0) by a central stalk formed by the gamma and epsilon chains, while a peripheral stalk is formed by the delta and b chains.

It is found in the cell membrane. It catalyses the reaction ATP + H2O + 4 H(+)(in) = ADP + phosphate + 5 H(+)(out). Produces ATP from ADP in the presence of a proton gradient across the membrane. The alpha chain is a regulatory subunit. The chain is ATP synthase subunit alpha from Renibacterium salmoninarum (strain ATCC 33209 / DSM 20767 / JCM 11484 / NBRC 15589 / NCIMB 2235).